The primary structure comprises 847 residues: Ras GTPase-activating protein 2 (847 aa).

The segment covering 1 to 18 has biased composition (low complexity); the sequence is MAAAAPAAAALTEAPAVP. The segment at 1-31 is disordered; sequence MAAAAPAAAALTEAPAVPGTAEPETGDEDSR. At Ala2 the chain carries N-acetylalanine. C2 domains are found at residues 19–137 and 148–288; these read GTAE…ETWF and VQGK…QAWY. The region spanning 371–588 is the Ras-GAP domain; that stretch reads NKLVPFITAV…TDVKKFLDEI (218 aa). At Ser554 the chain carries Phosphoserine. The PH domain occupies 603–704; that stretch reads VHLKEGEMYK…WIDMLCRVSR (102 aa). The segment at 706–742 adopts a Btk-type zinc-finger fold; it reads NHNRLSSFHPSAYLNGNWLCCQETSEGTPGCKPCTAG. His714, Cys725, Cys726, and Cys736 together coordinate Zn(2+). Residues 819–847 form a disordered region; it reads DEPHEKYRKKRSSSAKYGSKENPIVGKIS.

As to expression, widely expressed. Higher expression in brain, placenta, and kidney.

It is found in the cell membrane. Its function is as follows. Inhibitory regulator of the Ras-cyclic AMP pathway. May bind inositol tetrakisphosphate (IP4) and phospholipids. The polypeptide is Ras GTPase-activating protein 2 (Rasa2) (Rattus norvegicus (Rat)).